The primary structure comprises 453 residues: Cobyrinate a,c-diamide synthase (453 aa).

In terms of domain architecture, GATase cobBQ-type spans 250-440 (RIAVPFDEAF…IHTHTACLPD (191 aa)). The active-site Nucleophile is the cysteine 332.

It belongs to the CobB/CbiA family. It depends on Mg(2+) as a cofactor.

It catalyses the reaction cob(II)yrinate + 2 L-glutamine + 2 ATP + 2 H2O = cob(II)yrinate a,c diamide + 2 L-glutamate + 2 ADP + 2 phosphate + 2 H(+). The catalysed reaction is Ni-sirohydrochlorin + 2 L-glutamine + 2 ATP + 2 H2O = Ni-sirohydrochlorin a,c-diamide + 2 L-glutamate + 2 ADP + 2 phosphate + 2 H(+). It functions in the pathway cofactor biosynthesis; adenosylcobalamin biosynthesis; cob(II)yrinate a,c-diamide from sirohydrochlorin (anaerobic route): step 10/10. In terms of biological role, catalyzes the ATP-dependent amidation of the two carboxylate groups at positions a and c of cobyrinate, using either L-glutamine or ammonia as the nitrogen source. Involved in the biosynthesis of the unique nickel-containing tetrapyrrole coenzyme F430, the prosthetic group of methyl-coenzyme M reductase (MCR), which plays a key role in methanogenesis and anaerobic methane oxidation. Catalyzes the ATP-dependent amidation of the two carboxylate groups at positions a and c of Ni-sirohydrochlorin, using L-glutamine or ammonia as the nitrogen source. This chain is Cobyrinate a,c-diamide synthase, found in Methanosphaera stadtmanae (strain ATCC 43021 / DSM 3091 / JCM 11832 / MCB-3).